The following is a 394-amino-acid chain: 3-dehydroquinate synthase (394 aa).

NAD(+) contacts are provided by residues 112–116 (GVIGD), 136–137 (TT), Lys149, Lys158, and 176–179 (TLAT). The Zn(2+) site is built by Glu191, His254, and His276. Over residues 371-388 (STNQHTTYSPHQHATTKP) the composition is skewed to polar residues. Residues 371-394 (STNQHTTYSPHQHATTKPPNRRPH) are disordered.

The protein belongs to the sugar phosphate cyclases superfamily. Dehydroquinate synthase family. Requires NAD(+) as cofactor. Co(2+) is required as a cofactor. It depends on Zn(2+) as a cofactor.

The protein localises to the cytoplasm. It carries out the reaction 7-phospho-2-dehydro-3-deoxy-D-arabino-heptonate = 3-dehydroquinate + phosphate. Its pathway is metabolic intermediate biosynthesis; chorismate biosynthesis; chorismate from D-erythrose 4-phosphate and phosphoenolpyruvate: step 2/7. In terms of biological role, catalyzes the conversion of 3-deoxy-D-arabino-heptulosonate 7-phosphate (DAHP) to dehydroquinate (DHQ). In Xylella fastidiosa (strain 9a5c), this protein is 3-dehydroquinate synthase.